A 554-amino-acid chain; its full sequence is Arginine--tRNA ligase (554 aa).

The 'HIGH' region signature appears at 130–140 (ANPTGDLHIGH).

This sequence belongs to the class-I aminoacyl-tRNA synthetase family. In terms of assembly, monomer.

Its subcellular location is the cytoplasm. It catalyses the reaction tRNA(Arg) + L-arginine + ATP = L-arginyl-tRNA(Arg) + AMP + diphosphate. This chain is Arginine--tRNA ligase, found in Staphylococcus carnosus (strain TM300).